The sequence spans 173 residues: Zinc finger A20 and AN1 domain-containing stress-associated protein 2 (173 aa).

The segment at 12–46 (PEGPKLCTNNCGFFGSAATMNMCSKCHKDMLFQQE) adopts an A20-type zinc-finger fold. The Zn(2+) site is built by C18, C22, C34, C37, C114, C117, C128, C130, C135, H138, H144, and C146. The segment at 108-154 (PKGPSRCTTCNKRVGLTGFKCRCGSLFCGTHRYADVHDCSFNYHAAA) adopts an AN1-type zinc-finger fold.

In terms of biological role, may be involved in environmental stress response. The chain is Zinc finger A20 and AN1 domain-containing stress-associated protein 2 (SAP2) from Arabidopsis thaliana (Mouse-ear cress).